The sequence spans 373 residues: Protein-glutamate methylesterase/protein-glutamine glutaminase 2 (373 aa).

Positions 4-121 (KVLVVDDSGF…SRNPEKVKQL (118 aa)) constitute a Response regulatory domain. A 4-aspartylphosphate modification is found at Asp-55. Residues 136 to 181 (FSSYSAPAPQPASAPAPAPSSFASSRSPAPAPAPARAAAPAASANS) form a disordered region. Positions 143-153 (APQPASAPAPA) are enriched in pro residues. The segment covering 154 to 181 (PSSFASSRSPAPAPAPARAAAPAASANS) has biased composition (low complexity). The CheB-type methylesterase domain maps to 182–370 (PAPKRKAYKL…LDDIGRHLVE (189 aa)). Catalysis depends on residues Ser-197, His-224, and Asp-317.

This sequence belongs to the CheB family. In terms of processing, phosphorylated by CheA. Phosphorylation of the N-terminal regulatory domain activates the methylesterase activity.

The protein localises to the cytoplasm. The catalysed reaction is [protein]-L-glutamate 5-O-methyl ester + H2O = L-glutamyl-[protein] + methanol + H(+). It catalyses the reaction L-glutaminyl-[protein] + H2O = L-glutamyl-[protein] + NH4(+). Its function is as follows. Involved in chemotaxis. Part of a chemotaxis signal transduction system that modulates chemotaxis in response to various stimuli. Catalyzes the demethylation of specific methylglutamate residues introduced into the chemoreceptors (methyl-accepting chemotaxis proteins or MCP) by CheR. Also mediates the irreversible deamidation of specific glutamine residues to glutamic acid. The chain is Protein-glutamate methylesterase/protein-glutamine glutaminase 2 from Pseudomonas fluorescens (strain ATCC BAA-477 / NRRL B-23932 / Pf-5).